Reading from the N-terminus, the 399-residue chain is Tryptophan synthase beta chain (399 aa).

Lys-92 is modified (N6-(pyridoxal phosphate)lysine).

It belongs to the TrpB family. As to quaternary structure, tetramer of two alpha and two beta chains. It depends on pyridoxal 5'-phosphate as a cofactor.

The catalysed reaction is (1S,2R)-1-C-(indol-3-yl)glycerol 3-phosphate + L-serine = D-glyceraldehyde 3-phosphate + L-tryptophan + H2O. It participates in amino-acid biosynthesis; L-tryptophan biosynthesis; L-tryptophan from chorismate: step 5/5. In terms of biological role, the beta subunit is responsible for the synthesis of L-tryptophan from indole and L-serine. The polypeptide is Tryptophan synthase beta chain (Oceanobacillus iheyensis (strain DSM 14371 / CIP 107618 / JCM 11309 / KCTC 3954 / HTE831)).